A 2465-amino-acid polypeptide reads, in one-letter code: Serine/threonine-protein kinase TOR (2465 aa).

HEAT repeat units lie at residues 184–221, 271–308, 348–389, 549–587, 588–625, 717–755, 761–799, 888–926, 981–1018, 1022–1059, and 1061–1098; these read VHVPEFVDAIWVALRDPKQAVRERAVEALRACLHVIEK, SRYREVADIVLNYLRHRDQLVRRSITSLLPRIAHFLRD, AELV…AMGP, RLVEEIVEKLLMAAVADADVGVRSSVFKALYRNPSFDDF, LAQADIMTSIFVALNDEEYHVRELAISVAGRLSEKNPA, QYLPELMPLVVDALLDGGAVSKREVAVATLGQVIQSTGY, NEYPPLLGLLLKLLNGELEWSTRLEVLKVLGIMGALDPH, PYLPKVLPELFRAVRMCEDGGLKEFITWKLGTLVSIVRQ, MYILHILPSCIQVLGDAERCNDYYYVPDILHTLEVFGG, EHMHLVAPVLVRLFKVELVDIRRRAIVTLTKLIPTVQV, and THVSVLVHHLKLVLDGNNDDLRKDAAEALCCLAHALGE. Residues 1158-1191 form a disordered region; that stretch reads DFGGVPSEEADETQRQPRSHQVNDVRLRSAGEAS. The FAT domain maps to 1297–1877; the sequence is LLGALAEKCR…MYPLLVACKS (581 aa). The 319-residue stretch at 2051-2369 folds into the PI3K/PI4K catalytic domain; that stretch reads FVPQLIVITS…PPRGAREREL (319 aa). Positions 2057–2063 are G-loop; the sequence is VITSKQR. Residues 2230-2238 are catalytic loop; sequence GLGDRHPSN. The segment at 2250-2275 is activation loop; the sequence is HIDFGDCFEASMNREKFPEKVPFRLT. The disordered stretch occupies residues 2401–2431; it reads RDFSSGSSLSGAGSSTQHGNEHLASGDTREV. A compositionally biased stretch (low complexity) spans 2404–2415; sequence SSGSSLSGAGSS. The 33-residue stretch at 2433–2465 folds into the FATC domain; that stretch reads PGLSVKVQVQRLILQATSHENLCQNYVGWCPFW.

This sequence belongs to the PI3/PI4-kinase family. The target of rapamycin complex 1 (TORC1) is composed of at least RAPTOR, LST8 and TOR.

The enzyme catalyses L-seryl-[protein] + ATP = O-phospho-L-seryl-[protein] + ADP + H(+). It catalyses the reaction L-threonyl-[protein] + ATP = O-phospho-L-threonyl-[protein] + ADP + H(+). Its activity is regulated as follows. Insensitive to inhibition by rapamycin. In terms of biological role, component of TORC1 complex, which is an essential cell growth regulator that controls plant development. Acts through the phosphorylation of downstream effectors that are recruited by the binding partner RAPTOR. Acts by activating transcription, protein synthesis and ribosome biogenesis, and inhibiting mRNA degradation and autophagy. The sequence is that of Serine/threonine-protein kinase TOR from Oryza sativa subsp. japonica (Rice).